We begin with the raw amino-acid sequence, 185 residues long: Elongation factor P (185 aa).

This sequence belongs to the elongation factor P family.

It is found in the cytoplasm. Its pathway is protein biosynthesis; polypeptide chain elongation. Involved in peptide bond synthesis. Stimulates efficient translation and peptide-bond synthesis on native or reconstituted 70S ribosomes in vitro. Probably functions indirectly by altering the affinity of the ribosome for aminoacyl-tRNA, thus increasing their reactivity as acceptors for peptidyl transferase. This chain is Elongation factor P, found in Kosmotoga olearia (strain ATCC BAA-1733 / DSM 21960 / TBF 19.5.1).